The sequence spans 376 residues: MTEEYFIQGNDACARGAIKAGCRFFAGYPITPSTEIAEEMALLLPREGGVFVQMEDEIGALGAVIGAVWSGVRGMTATSGPGFSLMQEHVGYAAMTETPLVIVNVQRGSPSTGQPTMASQSDMMQARWGSHGDYEIIALSPSSVQECFDFTVRAFNLAEEYRVPVMVMGDEIVGHMREKITIPDRVKIRKRRGPSVPPEEFLPFSAPEDGVPEMPAFGDGYRIPVTGLTHDEGGYPDASNPEGHHRLVKRLCDKILRHRDRISDVQEELTEDAYITVISYGAPSRSVATAVKMAREDGVRAGYLKINTPWPFPETEVRAAAERSGKLLVVEMNLGQMFYEVQRVAAGMAEVELLPKIGGEIHRPEEILNMILKMNR.

As to quaternary structure, heterotetramer of the KorA, KorB, KorC and KorD subunits.

The enzyme catalyses 2 oxidized [2Fe-2S]-[ferredoxin] + 2-oxoglutarate + CoA = succinyl-CoA + 2 reduced [2Fe-2S]-[ferredoxin] + CO2 + H(+). This Methanothermobacter thermautotrophicus (strain ATCC 29096 / DSM 1053 / JCM 10044 / NBRC 100330 / Delta H) (Methanobacterium thermoautotrophicum) protein is 2-oxoglutarate synthase subunit KorA (korA).